The following is a 378-amino-acid chain: MKHSVHFGAGNIGRGFIGEILFKNGFHIDFVDVNNQIIHALNEKGKYEIEIAQKGQSRIEVTNVAGINSKEHPEQVIEAIQKTDIITTAIGPNILPFIAELLAKGIEARRVAGNTQVLDVMACENMIGGSQFLYQEVKKYLSPEGLTFADNYIGFPNAAVDRIVPAQSHEDSLFVVVEPFNEWVVETKRLKNPDLRLKDVHYEEDLEPFIERKLFSVNSGHATSAYIGAHYGAKTILEALQNPNIKSRIESVLAEIRSLLIAKWNFDKKELENYHKVIIERFENPFIVDEVSRVARTPIRKLGYNERFIRPIRELKELSLSYKNLLKTVGYAFDYRDVNDEESIRLGELLAKQLVKDVVIQVTGLDDQELIEQIVEYI.

Residue 4–15 (SVHFGAGNIGRG) coordinates NAD(+).

It belongs to the mannitol dehydrogenase family.

The enzyme catalyses D-mannitol 1-phosphate + NAD(+) = beta-D-fructose 6-phosphate + NADH + H(+). This chain is Mannitol-1-phosphate 5-dehydrogenase, found in Streptococcus pneumoniae (strain ATCC BAA-255 / R6).